A 340-amino-acid polypeptide reads, in one-letter code: Guanine nucleotide-binding protein G(I)/G(S)/G(T) subunit beta-2 (340 aa).

The residue at position 2 (Ser2) is an N-acetylserine. WD repeat units lie at residues 53–83, 95–125, 141–170, 182–212, 224–254, 268–298, and 310–340; these read GHLAKIYAMHWGTDSRLLVSASQDGKLIIWD, LRSSWVMTCAYAPSGNFVACGGLDNICSIYS, GHTGYLSCCRFLDDNQIITSSGDTTCALWD, GHSGDVMSLSLAPDGRTFVSGACDASIKLWD, GHESDINAVAFFPNGYAFTTGSDDATCRLFD, NIICGITSVAFSRSGRLLLAGYDDFNCNIWD, and GHDNRVSCLGVTDDGMAVATGSWDSFLKIWN. Tyr239 is subject to Phosphotyrosine.

Belongs to the WD repeat G protein beta family. G proteins are composed of 3 units, alpha, beta and gamma. In this context, interacts with GNAI2 and GNG2. Interacts with ARHGEF18 and RASD2. Interacts with ATXN10. Interacts with SCN8A. Expressed in all cardiac subcompartments and in the brain, with highest levels in the atrioventricular node and brain.

The protein localises to the cytoplasm. It localises to the perinuclear region. Its subcellular location is the cell membrane. Functionally, guanine nucleotide-binding proteins (G proteins) are involved as a modulator or transducer in various transmembrane signaling systems. The beta and gamma chains are required for the GTPase activity, for replacement of GDP by GTP, and for G protein-effector interaction. This chain is Guanine nucleotide-binding protein G(I)/G(S)/G(T) subunit beta-2 (GNB2), found in Homo sapiens (Human).